The sequence spans 307 residues: Taste receptor type 2 member 41 (307 aa).

Residues Met-1–Ala-7 lie on the Extracellular side of the membrane. A helical transmembrane segment spans residues Phe-8–Val-28. Residues Leu-29 to Arg-40 lie on the Cytoplasmic side of the membrane. Residues Leu-41–Val-61 traverse the membrane as a helical segment. The Extracellular portion of the chain corresponds to Gly-62–His-88. Residues Trp-89–Val-109 form a helical membrane-spanning segment. Residues Lys-110–Trp-129 lie on the Cytoplasmic side of the membrane. A helical transmembrane segment spans residues Val-130–Trp-150. The Extracellular segment spans residues Val-151–Ser-183. A glycan (N-linked (GlcNAc...) asparagine) is linked at Asn-167. The helical transmembrane segment at Leu-184–Ile-204 threads the bilayer. Over Asn-205–Lys-234 the chain is Cytoplasmic. Residues Ser-235–Thr-255 traverse the membrane as a helical segment. At Lys-256 to Phe-264 the chain is on the extracellular side. The chain crosses the membrane as a helical span at residues Tyr-265 to Phe-285. Residues Ser-286 to Ala-307 lie on the Cytoplasmic side of the membrane.

It belongs to the G-protein coupled receptor T2R family.

The protein localises to the membrane. Functionally, receptor that may play a role in the perception of bitterness and is gustducin-linked. May play a role in sensing the chemical composition of the gastrointestinal content. The activity of this receptor may stimulate alpha gustducin, mediate PLC-beta-2 activation and lead to the gating of TRPM5. The polypeptide is Taste receptor type 2 member 41 (TAS2R41) (Pongo pygmaeus (Bornean orangutan)).